The chain runs to 98 residues: Biogenesis of lysosome-related organelles complex 1 subunit SNN1 (98 aa).

Residues 55–98 (MDEQELLQEEGSLKEELARVNQLKKRLDKLTELYAELARKCGAL) are a coiled coil.

This sequence belongs to the SNAPIN family. As to quaternary structure, component of the biogenesis of lysosome-related organelles complex-1 (BLOC-1).

The protein resides in the endosome. Its function is as follows. Component of the biogenesis of lysosome-related organelles complex-1 (BLOC-1), a complex involved in endosomal cargo sorting. This chain is Biogenesis of lysosome-related organelles complex 1 subunit SNN1 (SNN1), found in Eremothecium gossypii (strain ATCC 10895 / CBS 109.51 / FGSC 9923 / NRRL Y-1056) (Yeast).